The primary structure comprises 472 residues: Siroheme synthase (472 aa).

Residues 1 to 207 (MNFLPIFLDI…GKDQAAKAWL (207 aa)) form a precorrin-2 dehydrogenase /sirohydrochlorin ferrochelatase region. Residues 22–23 (EV) and 43–44 (PR) each bind NAD(+). Ser132 bears the Phosphoserine mark. The uroporphyrinogen-III C-methyltransferase stretch occupies residues 221 to 472 (GEVYLVGAGP…QPEGNLPGAE (252 aa)). Position 230 (Pro230) interacts with S-adenosyl-L-methionine. The Proton acceptor role is filled by Asp253. The active-site Proton donor is Lys275. S-adenosyl-L-methionine contacts are provided by residues 306–308 (GGD), Ile311, 336–337 (TA), Met388, and Gly417.

The protein in the N-terminal section; belongs to the precorrin-2 dehydrogenase / sirohydrochlorin ferrochelatase family. In the C-terminal section; belongs to the precorrin methyltransferase family.

The enzyme catalyses uroporphyrinogen III + 2 S-adenosyl-L-methionine = precorrin-2 + 2 S-adenosyl-L-homocysteine + H(+). The catalysed reaction is precorrin-2 + NAD(+) = sirohydrochlorin + NADH + 2 H(+). It carries out the reaction siroheme + 2 H(+) = sirohydrochlorin + Fe(2+). It functions in the pathway cofactor biosynthesis; adenosylcobalamin biosynthesis; precorrin-2 from uroporphyrinogen III: step 1/1. It participates in cofactor biosynthesis; adenosylcobalamin biosynthesis; sirohydrochlorin from precorrin-2: step 1/1. The protein operates within porphyrin-containing compound metabolism; siroheme biosynthesis; precorrin-2 from uroporphyrinogen III: step 1/1. Its pathway is porphyrin-containing compound metabolism; siroheme biosynthesis; siroheme from sirohydrochlorin: step 1/1. It functions in the pathway porphyrin-containing compound metabolism; siroheme biosynthesis; sirohydrochlorin from precorrin-2: step 1/1. Functionally, multifunctional enzyme that catalyzes the SAM-dependent methylations of uroporphyrinogen III at position C-2 and C-7 to form precorrin-2 via precorrin-1. Then it catalyzes the NAD-dependent ring dehydrogenation of precorrin-2 to yield sirohydrochlorin. Finally, it catalyzes the ferrochelation of sirohydrochlorin to yield siroheme. This Nitrosospira multiformis (strain ATCC 25196 / NCIMB 11849 / C 71) protein is Siroheme synthase.